The sequence spans 502 residues: uncharacterized protein (502 aa).

Residues 1 to 21 (MKIFLVILSVFFFNGCFGLAY) form a helical membrane-spanning segment. PLD phosphodiesterase domains are found at residues 162 to 189 (IKKR…GDNY) and 396 to 423 (TKHS…DPRS).

The protein belongs to the phospholipase D family. Cardiolipin synthase subfamily.

It localises to the cell membrane. This is an uncharacterized protein from Helicobacter pylori (strain J99 / ATCC 700824) (Campylobacter pylori J99).